The sequence spans 593 residues: DNA mismatch repair protein MutL (593 aa).

It belongs to the DNA mismatch repair MutL/HexB family.

Its function is as follows. This protein is involved in the repair of mismatches in DNA. It is required for dam-dependent methyl-directed DNA mismatch repair. May act as a 'molecular matchmaker', a protein that promotes the formation of a stable complex between two or more DNA-binding proteins in an ATP-dependent manner without itself being part of a final effector complex. The sequence is that of DNA mismatch repair protein MutL from Leptospira interrogans serogroup Icterohaemorrhagiae serovar copenhageni (strain Fiocruz L1-130).